We begin with the raw amino-acid sequence, 954 residues long: Lysine-specific demethylase JMJ14 (954 aa).

The disordered stretch occupies residues 1–46; the sequence is MDQLASLAESVAMEEDSEKQSIKGESSLEPDSTPSSPKITARWNPS. Positions 29–38 are enriched in polar residues; it reads EPDSTPSSPK. The JmjN domain occupies 56–97; sequence APIFYPTNEDFDDPLGYIEKLRSKAESYGICRIVPPVAWRPP. A Nuclear localization signal 1 motif is present at residues 136–143; sequence RKRRRISK. Positions 148–170 are disordered; it reads RRKRDSGCDTASSGSSDSEGKFG. In terms of domain architecture, JmjC spans 263–429; the sequence is QYSQCGWNLN…HGQNAVEGYS (167 aa). Residues histidine 309, glutamate 311, and histidine 397 each coordinate Fe cation. The Nuclear localization signal 2 motif lies at 470–477; it reads WKRVCSED. Zn(2+) is bound by residues cysteine 519, cysteine 522, cysteine 533, cysteine 535, cysteine 542, histidine 545, cysteine 550, and cysteine 552. The C5HC2 zinc finger occupies 519–571; that stretch reads CFLCFYDLHMSASSCKCSPNRFACLIHAKDLCSCESKDRYILIRHTLDELWAL. The interval 641 to 670 is disordered; the sequence is SNKEVQLKQDGDSDVNRHGHESERNHVHGI. The span at 645–670 shows a compositional bias: basic and acidic residues; sequence VQLKQDGDSDVNRHGHESERNHVHGI. The FYR N-terminal domain maps to 726-784; sequence ATNRLSLSVELLSSGSLVVKKLWCSKQAIYPKGFKSRVKFLSVLDPTNLTNYISEVLDA. The FYR C-terminal domain occupies 786 to 876; sequence LLGPLFRVSV…HQLEEYWNQK (91 aa). A disordered region spans residues 884–905; that stretch reads EPIKEGEKDDTEKGGASDPSLD. Residues 885–905 are compositionally biased toward basic and acidic residues; it reads PIKEGEKDDTEKGGASDPSLD.

It belongs to the JARID1 histone demethylase family. In terms of assembly, interacts with NAC050 and NAC051/NAC052. Interacts with THAL in the nucleus. Fe(2+) serves as cofactor. Expressed in shoot apex, primary root tip, trichomes of young leaves, leaf vascular tissues, anther filaments and styles. Detected in inflorescences, leaves, stems, roots and siliques. Mostly expressed in floral organs, and, at low levels, in other organs.

The protein localises to the nucleus. It is found in the nucleoplasm. The enzyme catalyses N(6),N(6),N(6)-trimethyl-L-lysyl(4)-[histone H3] + 2-oxoglutarate + O2 = N(6),N(6)-dimethyl-L-lysyl(4)-[histone H3] + formaldehyde + succinate + CO2. It carries out the reaction N(6),N(6)-dimethyl-L-lysyl(4)-[histone H3] + 2-oxoglutarate + O2 = N(6)-methyl-L-lysyl(4)-[histone H3] + formaldehyde + succinate + CO2. It catalyses the reaction N(6)-methyl-L-lysyl(4)-[histone H3] + 2-oxoglutarate + O2 = L-lysyl(4)-[histone H3] + formaldehyde + succinate + CO2. The catalysed reaction is N(6),N(6),N(6)-trimethyl-L-lysyl(4)-[histone H3] + 3 2-oxoglutarate + 3 O2 = L-lysyl(4)-[histone H3] + 3 formaldehyde + 3 succinate + 3 CO2. In terms of biological role, transcriptional repressor. Histone demethylase that demethylates 'Lys-4' (H3K4me) of histone H3 with a higher activity for H3K4me3 and H3K4me2 than H3K4me1. No activity on H3K9me3/2, H3K36me3/2 and H3K27me3/2. Function as a nocturne 'eraser' to counteract the diurnal 'writer' methylase activity of ATXR3/SDG2 thus orchestrating the circadian rhythm of histone modifications (e.g. H3K4me3) and modulating the rhythmic expression of diurnal target genes; this mechanism also relies on the circadian clock oscillators CCA1 and LHY. Involved in a negative regulation of root meristem growth upon suboptimal root growth conditions. Represses FT and TSF expression to inhibit the floral transition. Binds around the transcription start site of the FT locus. Involved in the DRM2-mediated maintenance of DNA methylation, but not required for the de novo DNA methylation. Required for demethylating histone H3K4me3 at the target of RNA silencing. Counteracts the DNA methylation of expressed transgenes; specific attenuation of transgene DNA methylation enhances the production of aberrant RNAs (e.g. uncapped and antisense) that readily induce systemic RDR6-dependent post-transcriptional transgene silencing (PTGS) spreading. Together with NAC051/NAC052 and NAC050, regulates gene expression and flowering time, probably by the promotion of RNA-mediated gene silencing. Together with JMJ16 and JMJ17, required for plant growth and development. Promotes local and systemic immunity (especially toward the bacterial pathogen Pseudomonas syringae Pst DC3000 avrRpt2) by regulating positively pathogen-induced H3K4me3 enrichment and expression of defense genes involved in salicylic acid (SA)- and pipecolic acid (Pip)-mediated defense pathways (e.g. PR1, FMO1, ALD1 and SARD4). The chain is Lysine-specific demethylase JMJ14 from Arabidopsis thaliana (Mouse-ear cress).